A 273-amino-acid polypeptide reads, in one-letter code: NH(3)-dependent NAD(+) synthetase (273 aa).

Position 47–54 (47–54 (GISGGQDS)) interacts with ATP. D53 lines the Mg(2+) pocket. Residue R139 participates in deamido-NAD(+) binding. T159 provides a ligand contact to ATP. E164 is a binding site for Mg(2+). K172 and D179 together coordinate deamido-NAD(+). ATP contacts are provided by K188 and T210. 259–260 (HK) lines the deamido-NAD(+) pocket.

This sequence belongs to the NAD synthetase family. Homodimer.

The catalysed reaction is deamido-NAD(+) + NH4(+) + ATP = AMP + diphosphate + NAD(+) + H(+). The protein operates within cofactor biosynthesis; NAD(+) biosynthesis; NAD(+) from deamido-NAD(+) (ammonia route): step 1/1. Functionally, catalyzes the ATP-dependent amidation of deamido-NAD to form NAD. Uses ammonia as a nitrogen source. This is NH(3)-dependent NAD(+) synthetase from Staphylococcus haemolyticus (strain JCSC1435).